Here is a 267-residue protein sequence, read N- to C-terminus: Serine/threonine-protein kinase 1 (267 aa).

The region spanning 18-266 is the Protein kinase domain; the sequence is IQNNVRLVDG…YETVIKHSFL (249 aa). ATP is bound by residues 24 to 32 and Lys47; that span reads LVDGKFGKM. Asp134 (proton acceptor) is an active-site residue.

Belongs to the protein kinase superfamily. Ser/Thr protein kinase family.

It carries out the reaction L-seryl-[protein] + ATP = O-phospho-L-seryl-[protein] + ADP + H(+). The catalysed reaction is L-threonyl-[protein] + ATP = O-phospho-L-threonyl-[protein] + ADP + H(+). The sequence is that of Serine/threonine-protein kinase 1 (PK1) from Heliothis zea nuclear polyhedrosis virus (HzSNPV).